A 265-amino-acid chain; its full sequence is Small ribosomal subunit protein uS2 (265 aa).

It belongs to the universal ribosomal protein uS2 family.

The polypeptide is Small ribosomal subunit protein uS2 (Aliarcobacter butzleri (strain RM4018) (Arcobacter butzleri)).